Consider the following 606-residue polypeptide: Vacuolar calcium ion transporter (606 aa).

The disordered stretch occupies residues 1–110; sequence MSPPRRVSFP…NSLDPNPGLM (110 aa). At 1-137 the chain is on the cytoplasmic side; that stretch reads MSPPRRVSFP…PTYWGSMKAA (137 aa). A compositionally biased stretch (low complexity) spans 18 to 30; the sequence is PPLADSPLSSPKL. Residues 36-56 are compositionally biased toward polar residues; the sequence is QSSSTPIVSSNLPTDTTNSAS. A helical membrane pass occupies residues 138–158; that stretch reads ITSTWLNVLLVFIPIGWALYL. Residues 159 to 170 lie on the Vacuolar side of the membrane; the sequence is AKHNGGKDSISD. Residues 171-191 traverse the membrane as a helical segment; the sequence is TAVFCCTFIAIIPLAGLLGFA. Residues 192-204 lie on the Cytoplasmic side of the membrane; it reads TEEAALRLGQTLG. A helical transmembrane segment spans residues 205–225; it reads GLLNATLGNAVELIVAILALI. Residues 226-236 are Vacuolar-facing; the sequence is KCELQVVQSSL. The helical transmembrane segment at 237 to 257 threads the bilayer; it reads VGSILSNILLVLGMCFFAGGV. The Cytoplasmic portion of the chain corresponds to 258–272; sequence RFAEQAIKSTAAQLN. A helical membrane pass occupies residues 273-293; it reads ASLLLIAVIAVLIPSAFHFSI. At 294 to 313 the chain is on the vacuolar side; it reads SSSTSNTDASELANGEGADL. Residues 314–334 form a helical membrane-spanning segment; sequence LSMSHAVSILLLILYLGYLLF. Over 335–437 the chain is Cytoplasmic; it reads QMWTHATYYV…EEEEETPQMN (103 aa). The disordered stretch occupies residues 376 to 434; the sequence is DEEESYSTATTVSDAAVPPSARAEGGEVPATHGPGTAAAETGNRVEHEDAEEEEEEETP. Residues 423 to 433 show a composition bias toward acidic residues; the sequence is EDAEEEEEEET. A helical transmembrane segment spans residues 438-458; the sequence is VVCTIALMVIDTVLVGVTAEF. The Vacuolar segment spans residues 459–477; that stretch reads LVDSINGMVESNPSLSAEW. Residues 478-498 form a helical membrane-spanning segment; that stretch reads VGLILLPIVGNAAEHFTAVSV. Residues 499–505 lie on the Cytoplasmic side of the membrane; it reads SVKDKLD. The helical transmembrane segment at 506–526 threads the bilayer; the sequence is LSISVAVGSSIQIALFVIPVI. Residues 527–535 are Vacuolar-facing; that stretch reads ELLAWTIGK. Residues 536–556 traverse the membrane as a helical segment; it reads PMTLLFDPYESIVLFLSVLIV. Topologically, residues 557–566 are cytoplasmic; it reads NQTLADGRSN. The chain crosses the membrane as a helical span at residues 567–587; sequence WMEGMVLMMLYIIIAVSFWYY. Residues 588–606 are Vacuolar-facing; the sequence is PGSTTATLLGCQDSSSVTG.

This sequence belongs to the Ca(2+):cation antiporter (CaCA) (TC 2.A.19) family.

It localises to the vacuole membrane. Its function is as follows. Has a role in promoting intracellular calcium ion sequestration via the exchange of calcium ions for hydrogen ions across the vacuolar membrane. The protein is Vacuolar calcium ion transporter of Cryptococcus neoformans var. grubii serotype A (strain H99 / ATCC 208821 / CBS 10515 / FGSC 9487) (Filobasidiella neoformans var. grubii).